We begin with the raw amino-acid sequence, 315 residues long: Mycothiol acetyltransferase (315 aa).

N-acetyltransferase domains lie at 8–145 (VETS…LPLD) and 163–315 (VSLR…DATA). Residue Glu39 coordinates 1D-myo-inositol 2-(L-cysteinylamino)-2-deoxy-alpha-D-glucopyranoside. Acetyl-CoA is bound by residues 81–83 (LVV) and 89–94 (HHGVGT). 1D-myo-inositol 2-(L-cysteinylamino)-2-deoxy-alpha-D-glucopyranoside contacts are provided by Glu190, Lys229, and Glu243. Residue 247-249 (LGV) coordinates acetyl-CoA. Tyr281 provides a ligand contact to 1D-myo-inositol 2-(L-cysteinylamino)-2-deoxy-alpha-D-glucopyranoside. Residue 286-291 (NTVAIR) participates in acetyl-CoA binding.

This sequence belongs to the acetyltransferase family. MshD subfamily. As to quaternary structure, monomer.

The enzyme catalyses 1D-myo-inositol 2-(L-cysteinylamino)-2-deoxy-alpha-D-glucopyranoside + acetyl-CoA = mycothiol + CoA + H(+). In terms of biological role, catalyzes the transfer of acetyl from acetyl-CoA to desacetylmycothiol (Cys-GlcN-Ins) to form mycothiol. The sequence is that of Mycothiol acetyltransferase from Sanguibacter keddieii (strain ATCC 51767 / DSM 10542 / NCFB 3025 / ST-74).